A 75-amino-acid polypeptide reads, in one-letter code: Small ribosomal subunit protein bS21B (75 aa).

Residues 33–52 (RRSYEKPSERRAREKAEAVR) show a composition bias toward basic and acidic residues. The tract at residues 33 to 75 (RRSYEKPSERRAREKAEAVRRARKLARKQAQREGLLPGKKRAA) is disordered.

Belongs to the bacterial ribosomal protein bS21 family.

The protein is Small ribosomal subunit protein bS21B of Chelativorans sp. (strain BNC1).